A 167-amino-acid chain; its full sequence is MSVTLHTSHGDIKVEIYCESVPKTAENFLALCGSGYYDKSPFHRVIPKFMAQTGAPATPNPPENPKGGRSIWGGAFEDEIRPALRHGARGVLSMANKGPGTNGSQFFITFDKAPHLDGLNTVFGRVIGDEGLATLAKMEAVEVDRKNRPKEPVRIENVTIHANPLAG.

One can recognise a PPIase cyclophilin-type domain in the interval Met-1–Ile-160.

The protein belongs to the cyclophilin-type PPIase family. PPIL3 subfamily.

It carries out the reaction [protein]-peptidylproline (omega=180) = [protein]-peptidylproline (omega=0). In terms of biological role, PPIases accelerate the folding of proteins. It catalyzes the cis-trans isomerization of proline imidic peptide bonds in oligopeptides. This chain is Peptidyl-prolyl cis-trans isomerase-like 3 (CYP10), found in Gibberella zeae (strain ATCC MYA-4620 / CBS 123657 / FGSC 9075 / NRRL 31084 / PH-1) (Wheat head blight fungus).